Reading from the N-terminus, the 867-residue chain is Prominin-1 (867 aa).

The N-terminal stretch at 1–19 (MALVFSALLLLGLCGKISS) is a signal peptide. Topologically, residues 20–107 (EGQPAFHNTP…VLALKIALYE (88 aa)) are extracellular. Residues 108-128 (IGVLICAILGLLFIILMPLVG) traverse the membrane as a helical segment. Over 129-158 (CFFCMCRCCNKCGGEMHQRQKQNAPCRRKC) the chain is Cytoplasmic. Residues 159-179 (LGLSLLVICLLMSLGIIYGFV) form a helical membrane-spanning segment. At 180 to 434 (ANQQTRTRIK…LPKLEEYDSY (255 aa)) the chain is on the extracellular side. An N6-acetyllysine mark is found at Lys226, Lys258, and Lys265. 5 N-linked (GlcNAc...) asparagine glycosylation sites follow: Asn273, Asn291, Asn332, Asn374, and Asn415. Residues 435–455 (WWLGGLIVCFLLTLIVTFFFL) traverse the membrane as a helical segment. Over 456–487 (GLLCGVFGYDKHATPTRRGCVSNTGGIFLMAG) the chain is Cytoplasmic. Residues 488–508 (VGFGFLFCWILMILVVLTFVV) form a helical membrane-spanning segment. Residues 509-794 (GANVEKLLCE…LCGYVADPLN (286 aa)) are Extracellular-facing. 3 N-linked (GlcNAc...) asparagine glycosylation sites follow: Asn554, Asn581, and Asn732. The helical transmembrane segment at 795-815 (LFWFGIGKATVLLLPAVIIAI) threads the bilayer. Residues 816–867 (KLAKYYRRMDSEDVYDDVETVPMKNLEIGSNGYHKDHLYGVHNPVMTSPSRY) lie on the Cytoplasmic side of the membrane. Residue Ser865 is modified to Phosphoserine.

It belongs to the prominin family. In terms of assembly, interacts with CDHR1 and with actin filaments. Interacts with NAT8 and NAT8B. Post-translationally, acetylation at Lys-226, Lys-258 and Lys-265 by NAT8 and NAT8B may control PROM1 protein expression and its function in cell apoptosis. As to expression, in the submandibular gland, expressed on the apical side of epithelial cells. In the parotid gland, expressed in the intercalated ducts. In the sublingual gland, expressed in intercalated ducts. In the extraorbital lacrimal gland, expressed in the intercalated tubules and larger intralobular ducts. Expressed in the retina. Present in urine within small membrane particles (at protein level). In the embryo, expressed on the apical side of neuroepithelial cells and of other epithelia such as lung buds, gut and ureter buds. In the adult, expressed at the apical side of the kidney tubules and of the ependymal layer of the brain. Not expressed in gut, liver, lung, pituitary, adrenal, heart or spleen. Localized to the nascent disk membranes at the base of the rod outer segment in the retina (at protein level).

The protein localises to the apical cell membrane. It is found in the cell projection. Its subcellular location is the microvillus membrane. It localises to the cilium. The protein resides in the photoreceptor outer segment. The protein localises to the endoplasmic reticulum. It is found in the endoplasmic reticulum-Golgi intermediate compartment. In terms of biological role, may play a role in cell differentiation, proliferation and apoptosis. Binds cholesterol in cholesterol-containing plasma membrane microdomains and may play a role in the organization of the apical plasma membrane in epithelial cells. During early retinal development acts as a key regulator of disk morphogenesis. Involved in regulation of MAPK and Akt signaling pathways. In neuroblastoma cells suppresses cell differentiation such as neurite outgrowth in a RET-dependent manner. The sequence is that of Prominin-1 (Prom1) from Mus musculus (Mouse).